We begin with the raw amino-acid sequence, 497 residues long: Probable malate:quinone oxidoreductase (497 aa).

This sequence belongs to the MQO family. Requires FAD as cofactor.

It carries out the reaction (S)-malate + a quinone = a quinol + oxaloacetate. Its pathway is carbohydrate metabolism; tricarboxylic acid cycle; oxaloacetate from (S)-malate (quinone route): step 1/1. This Hahella chejuensis (strain KCTC 2396) protein is Probable malate:quinone oxidoreductase.